We begin with the raw amino-acid sequence, 257 residues long: Zinc transporter ZupT (257 aa).

Helical transmembrane passes span 5-25 (LILT…GVLG), 32-52 (LLAF…LMEM), 61-81 (GMSP…YFGL), 109-129 (AILL…ATFV), 137-157 (LGFG…LAVA), 171-191 (ILWA…AWLI), 195-215 (MISP…MVAL), and 236-256 (GVLC…TAGI). The Fe(2+) site is built by Asn120 and Glu123. Residues Glu123 and His148 each coordinate Zn(2+). Fe(2+) is bound by residues Asn149, Glu152, and Glu181. Zn(2+) is bound at residue Glu152.

The protein belongs to the ZIP transporter (TC 2.A.5) family. ZupT subfamily.

The protein localises to the cell inner membrane. The catalysed reaction is Zn(2+)(in) = Zn(2+)(out). Functionally, mediates zinc uptake. May also transport other divalent cations. This Shigella flexneri serotype 5b (strain 8401) protein is Zinc transporter ZupT.